We begin with the raw amino-acid sequence, 425 residues long: Riboflavin biosynthesis protein RibBA (425 aa).

Positions 1–204 are DHBP synthase; it reads MTRLDSVERA…IADLIEWRRK (204 aa). D-ribulose 5-phosphate-binding positions include 28–29, Asp-33, 141–145, and Glu-165; these read RE and RPGHT. Glu-29 serves as a coordination point for Mg(2+). Residue His-144 participates in Mg(2+) binding. Residues 205–425 are GTP cyclohydrolase II; that stretch reads HEKHIERVAE…HLPGEFGGAL (221 aa). Residue 259–263 coordinates GTP; it reads RVHSE. Residues Cys-264, Cys-275, and Cys-277 each coordinate Zn(2+). GTP-binding positions include Gln-280, 303 to 305, and Thr-325; that span reads EGR. The Proton acceptor; for GTP cyclohydrolase activity role is filled by Asp-337. The active-site Nucleophile; for GTP cyclohydrolase activity is the Arg-339. GTP contacts are provided by Thr-360 and Lys-365.

In the N-terminal section; belongs to the DHBP synthase family. The protein in the C-terminal section; belongs to the GTP cyclohydrolase II family. Mg(2+) is required as a cofactor. Requires Mn(2+) as cofactor. It depends on Zn(2+) as a cofactor.

The catalysed reaction is D-ribulose 5-phosphate = (2S)-2-hydroxy-3-oxobutyl phosphate + formate + H(+). The enzyme catalyses GTP + 4 H2O = 2,5-diamino-6-hydroxy-4-(5-phosphoribosylamino)-pyrimidine + formate + 2 phosphate + 3 H(+). Its pathway is cofactor biosynthesis; riboflavin biosynthesis; 2-hydroxy-3-oxobutyl phosphate from D-ribulose 5-phosphate: step 1/1. The protein operates within cofactor biosynthesis; riboflavin biosynthesis; 5-amino-6-(D-ribitylamino)uracil from GTP: step 1/4. Catalyzes the conversion of D-ribulose 5-phosphate to formate and 3,4-dihydroxy-2-butanone 4-phosphate. Its function is as follows. Catalyzes the conversion of GTP to 2,5-diamino-6-ribosylamino-4(3H)-pyrimidinone 5'-phosphate (DARP), formate and pyrophosphate. The polypeptide is Riboflavin biosynthesis protein RibBA (Mycobacterium bovis (strain ATCC BAA-935 / AF2122/97)).